The primary structure comprises 345 residues: uncharacterized protein (345 aa).

Belongs to the Gfo/Idh/MocA family. Biliverdin reductase subfamily.

This is an uncharacterized protein from Escherichia coli (strain K12).